The chain runs to 605 residues: Elongation factor 4 (605 aa).

The tr-type G domain maps to 9–192 (HHIRNFCIIA…AIVKRVPAPS (184 aa)). GTP is bound by residues 21–26 (DHGKST) and 139–142 (NKID).

The protein belongs to the TRAFAC class translation factor GTPase superfamily. Classic translation factor GTPase family. LepA subfamily.

The protein localises to the cell inner membrane. The catalysed reaction is GTP + H2O = GDP + phosphate + H(+). Functionally, required for accurate and efficient protein synthesis under certain stress conditions. May act as a fidelity factor of the translation reaction, by catalyzing a one-codon backward translocation of tRNAs on improperly translocated ribosomes. Back-translocation proceeds from a post-translocation (POST) complex to a pre-translocation (PRE) complex, thus giving elongation factor G a second chance to translocate the tRNAs correctly. Binds to ribosomes in a GTP-dependent manner. The polypeptide is Elongation factor 4 (Chlorobium phaeobacteroides (strain DSM 266 / SMG 266 / 2430)).